We begin with the raw amino-acid sequence, 247 residues long: MSILFIADVHLCNTKPKIIHGFLNFLYNHAMQAQALYILGDLFEVWLGDDEKNIMHMTIAKGLQSLHKKKVPCYFIRGNHDFLLGPKYANLCDMILLPDSQVLKLPSGKNVVILHGDTLCIDDKSYQRLRNFLHCQILQKIFLSLPLSMRLYIFNCARTFCIKYKKYKLKQNLHIKLQTVIDMLIKNQSKILIHGHTHQPAIHNIQISENISFKRIVLGQWNKYGSVATINEKNDDINLIHFPLNKQ.

Mn(2+)-binding residues include aspartate 8, histidine 10, aspartate 41, asparagine 79, and histidine 115. 79–80 contributes to the substrate binding site; sequence NH. 4 residues coordinate substrate: aspartate 123, lysine 165, lysine 168, and histidine 196. Mn(2+) contacts are provided by histidine 196 and histidine 198.

This sequence belongs to the LpxH family. Requires Mn(2+) as cofactor.

It is found in the cell inner membrane. It catalyses the reaction UDP-2-N,3-O-bis[(3R)-3-hydroxytetradecanoyl]-alpha-D-glucosamine + H2O = 2-N,3-O-bis[(3R)-3-hydroxytetradecanoyl]-alpha-D-glucosaminyl 1-phosphate + UMP + 2 H(+). The protein operates within glycolipid biosynthesis; lipid IV(A) biosynthesis; lipid IV(A) from (3R)-3-hydroxytetradecanoyl-[acyl-carrier-protein] and UDP-N-acetyl-alpha-D-glucosamine: step 4/6. Its function is as follows. Hydrolyzes the pyrophosphate bond of UDP-2,3-diacylglucosamine to yield 2,3-diacylglucosamine 1-phosphate (lipid X) and UMP by catalyzing the attack of water at the alpha-P atom. Involved in the biosynthesis of lipid A, a phosphorylated glycolipid that anchors the lipopolysaccharide to the outer membrane of the cell. In Blochmanniella floridana, this protein is UDP-2,3-diacylglucosamine hydrolase.